A 344-amino-acid polypeptide reads, in one-letter code: Protein BREVIS RADIX (344 aa).

In terms of domain architecture, BRX 1 spans 139–194; the sequence is KEWMAQVEPGVHITFASLPTGGNDLKRIRFSREMFDKWQAQRWWGENYDKIVELYN. Residues 203 to 286 form a disordered region; that stretch reads LQTPARSDDQ…DPPSMSNASE (84 aa). The span at 223–233 shows a compositional bias: basic and acidic residues; that stretch reads DSARESKDWTP. The segment covering 248 to 264 has biased composition (low complexity); the sequence is YGGSSNYGPGSYHGGPP. The 56-residue stretch at 289-344 folds into the BRX 2 domain; the sequence is AEWIEEDEPGVYITIRQLSDGTRELRRVRFSRERFGEVHAKTWWEQNRERIQTQYL.

The protein belongs to the BRX family. Homodimer and heterodimer with BRXL1. Interacts with NGA1 and ARF5. Expressed in the developing protophloem up to the elongation zone in root meristem of young seedlings, in the columella and the phloem vasculature throughout the root and in the phloem vasculature in the shoot. Detected in the shoot meristem and in primordia. Low expression in stomata. Confined to sieve element precursor cells and to protophloem.

The protein localises to the nucleus. It is found in the cell membrane. Functionally, acts as a regulator of cell proliferation and elongation in the root and shoot. Regulates roots architecture and primary root protophloem differentiation. BRX, BAM3, and CLE45 act together to regulate the transition of protophloem cells from proliferation to differentiation, thus impinging on postembryonic growth capacity of the root meristem. Probable transcription regulator. Regulated by the auxin response factor ARF5. Polarly localized in vascular cells and subject to endocytic recycling. Required for CPD expression and for correct nuclear auxin response. Mediates cross-talk between the auxin and brassinosteroid pathways. BRX is a target for auxin-induced, proteasome-mediated degradation. This Arabidopsis thaliana (Mouse-ear cress) protein is Protein BREVIS RADIX.